We begin with the raw amino-acid sequence, 139 residues long: Nucleoside diphosphate kinase (139 aa).

Lysine 10, phenylalanine 58, arginine 86, threonine 92, arginine 104, and asparagine 114 together coordinate ATP. The active-site Pros-phosphohistidine intermediate is histidine 117.

It belongs to the NDK family. As to quaternary structure, homotetramer. Mg(2+) serves as cofactor.

It localises to the cytoplasm. It catalyses the reaction a 2'-deoxyribonucleoside 5'-diphosphate + ATP = a 2'-deoxyribonucleoside 5'-triphosphate + ADP. The enzyme catalyses a ribonucleoside 5'-diphosphate + ATP = a ribonucleoside 5'-triphosphate + ADP. Major role in the synthesis of nucleoside triphosphates other than ATP. The ATP gamma phosphate is transferred to the NDP beta phosphate via a ping-pong mechanism, using a phosphorylated active-site intermediate. The sequence is that of Nucleoside diphosphate kinase from Rhodococcus jostii (strain RHA1).